A 347-amino-acid polypeptide reads, in one-letter code: GMP reductase (347 aa).

Ala-108–Ala-131 is an NADP(+) binding site. The K(+) site is built by Gly-181 and Gly-183. Cys-186 serves as the catalytic Thioimidate intermediate. Residue Ile-216–Val-239 participates in NADP(+) binding.

The protein belongs to the IMPDH/GMPR family. GuaC type 1 subfamily. Homotetramer.

It carries out the reaction IMP + NH4(+) + NADP(+) = GMP + NADPH + 2 H(+). Its function is as follows. Catalyzes the irreversible NADPH-dependent deamination of GMP to IMP. It functions in the conversion of nucleobase, nucleoside and nucleotide derivatives of G to A nucleotides, and in maintaining the intracellular balance of A and G nucleotides. The chain is GMP reductase from Shewanella halifaxensis (strain HAW-EB4).